A 197-amino-acid chain; its full sequence is UPF0200 protein MJ1399 (197 aa).

An ATP-binding site is contributed by 8–15; it reads GMPGAGKS.

It belongs to the UPF0200 family.

The sequence is that of UPF0200 protein MJ1399 from Methanocaldococcus jannaschii (strain ATCC 43067 / DSM 2661 / JAL-1 / JCM 10045 / NBRC 100440) (Methanococcus jannaschii).